Reading from the N-terminus, the 91-residue chain is Small ribosomal subunit protein uS19 (91 aa).

This sequence belongs to the universal ribosomal protein uS19 family.

Its function is as follows. Protein S19 forms a complex with S13 that binds strongly to the 16S ribosomal RNA. This Alcanivorax borkumensis (strain ATCC 700651 / DSM 11573 / NCIMB 13689 / SK2) protein is Small ribosomal subunit protein uS19.